The chain runs to 90 residues: uncharacterized protein (90 aa).

Helical transmembrane passes span 5–27, 40–62, and 67–89; these read FDILTLILTAIYLLIGGGFIIYI, IYLSIGFFLLIIGASLPVLTFVA, and MSVVVVAILMQIAGLSSIFYSIV.

It localises to the cell membrane. This is an uncharacterized protein from Archaeoglobus fulgidus (strain ATCC 49558 / DSM 4304 / JCM 9628 / NBRC 100126 / VC-16).